The primary structure comprises 165 residues: Lipoprotein signal peptidase (165 aa).

Helical transmembrane passes span 9–29 (PFLWISAVAFFTDLITKLAVV), 65–85 (WQKYFFILLALVVSFMILFFL), and 97–119 (TGYALMVGGALANAADRAYHGFV). Active-site residues include Asp-121 and Asp-139. The helical transmembrane segment at 134-154 (VFNIADVAICIGAGLLAIDAF) threads the bilayer.

The protein belongs to the peptidase A8 family.

It localises to the cell inner membrane. The catalysed reaction is Release of signal peptides from bacterial membrane prolipoproteins. Hydrolyzes -Xaa-Yaa-Zaa-|-(S,diacylglyceryl)Cys-, in which Xaa is hydrophobic (preferably Leu), and Yaa (Ala or Ser) and Zaa (Gly or Ala) have small, neutral side chains.. The protein operates within protein modification; lipoprotein biosynthesis (signal peptide cleavage). Functionally, this protein specifically catalyzes the removal of signal peptides from prolipoproteins. In Histophilus somni (strain 129Pt) (Haemophilus somnus), this protein is Lipoprotein signal peptidase.